Reading from the N-terminus, the 1083-residue chain is uncharacterized protein (1083 aa).

The interval S93–S145 is disordered. The span at S108–S145 shows a compositional bias: low complexity.

The protein localises to the virion. This is an uncharacterized protein from Acanthamoeba polyphaga (Amoeba).